A 203-amino-acid polypeptide reads, in one-letter code: Urease accessory protein UreG (203 aa).

GTP is bound at residue 14–21 (GPVGSGKT).

The protein belongs to the SIMIBI class G3E GTPase family. UreG subfamily. Homodimer. UreD, UreF and UreG form a complex that acts as a GTP-hydrolysis-dependent molecular chaperone, activating the urease apoprotein by helping to assemble the nickel containing metallocenter of UreC. The UreE protein probably delivers the nickel.

It localises to the cytoplasm. Its function is as follows. Facilitates the functional incorporation of the urease nickel metallocenter. This process requires GTP hydrolysis, probably effectuated by UreG. This Rhizobium johnstonii (strain DSM 114642 / LMG 32736 / 3841) (Rhizobium leguminosarum bv. viciae) protein is Urease accessory protein UreG.